A 147-amino-acid polypeptide reads, in one-letter code: Small ribosomal subunit protein uS12 (147 aa).

This sequence belongs to the universal ribosomal protein uS12 family. Part of the 30S ribosomal subunit.

Functionally, with S4 and S5 plays an important role in translational accuracy. Located at the interface of the 30S and 50S subunits. The polypeptide is Small ribosomal subunit protein uS12 (Pyrobaculum calidifontis (strain DSM 21063 / JCM 11548 / VA1)).